The chain runs to 605 residues: MADRLTRIAIVSSDRCKPKKCRQECKKSCPVVKTGKLCIEVTVGSKLAFISEELCIGCGICVKKCPFEAIQIINLPRDLEKDTTHRYGANTFKLHRLPVPRPGQVLGLVGTNGIGKSTALKILAGKLKPNLGRFTSPPDWQEILTHFRGSELQNYFTRILEDNLKAIIKPQYVDHIPRAVKGNVGEVLDQKDERDKKAELCADLELNQVIDRDVENLSGGELQRFAIAVVAIQNAEIYMFDEPSSYLDVKQRLKAAQVVRSLLRPNSYVIVVEHDLSVLDYLSDFICCLYGKPGAYGVVTLPFSVREGINIFLAGFVPTENLRFRDESLTFKVAETPQESAEEIQSYARYKYPTMTKTQGNFRLRVSEGEFTDSQIIVMLGENGTGKTTFIRMLAGLLKPDDTEGPDREIPEFNVSYKPQKISPKFQNSVRHLLHQKIRDSYMHPQFMSDVMKPLQIEQLMDQEVVNLSGGELQRVALTLCLGKPADIYLIDEPSAYLDSEQRIVASKVIKRFILHAKKTAFVVEHDFIMATYLADRVIVYEGQPSIDCTANCPQSLLSGMNLFLSHLNITFRRDPTNFRPRINKLESTKDREQKSAGSYYYLDD.

One can recognise a 4Fe-4S ferredoxin-type domain in the interval 46-75; it reads KLAFISEELCIGCGICVKKCPFEAIQIINL. ABC transporter domains follow at residues 70–315 and 344–568; these read IQII…FLAG and IQSY…LSHL. ATP-binding positions include 110-117 and 381-388; these read GTNGIGKS and GENGTGKT.

The protein belongs to the ABC transporter superfamily. ABCE family. Expressed in roots, stems, leaves, flowers and siliques.

Its subcellular location is the membrane. This Arabidopsis thaliana (Mouse-ear cress) protein is ABC transporter E family member 2 (ABCE2).